Reading from the N-terminus, the 185-residue chain is Ribosome-recycling factor (185 aa).

An N6-acetyllysine modification is found at lysine 162.

Belongs to the RRF family.

It is found in the cytoplasm. Responsible for the release of ribosomes from messenger RNA at the termination of protein biosynthesis. May increase the efficiency of translation by recycling ribosomes from one round of translation to another. This Shigella boydii serotype 18 (strain CDC 3083-94 / BS512) protein is Ribosome-recycling factor.